A 266-amino-acid polypeptide reads, in one-letter code: Protein-ADP-ribose hydrolase (266 aa).

The 192-residue stretch at 74–265 (TDLKDLKPIK…LYKEAFNRDA (192 aa)) folds into the Macro domain. ADP-D-ribose is bound by residues D93, I94, and N107. Zn(2+) is bound by residues C113, H118, and C120. Residues C120, I121, D122, S212, T213, G214, and F216 each contribute to the ADP-D-ribose site.

It belongs to the MacroD-type family. Zn-Macro subfamily. Requires Zn(2+) as cofactor.

It catalyses the reaction 4-O-(ADP-D-ribosyl)-L-aspartyl-[protein] + H2O = L-aspartyl-[protein] + ADP-D-ribose + H(+). ADP-ribosylhydrolase that specifically reverses the SirTM-mediated mono-ADP-ribosylation at an asparatate residue of GcvH-L, by releasing ADP-ribose from the target protein. May play a role in the regulation of the response to host-induced oxidative stress. This Staphylococcus aureus (strain MRSA252) protein is Protein-ADP-ribose hydrolase.